Reading from the N-terminus, the 212-residue chain is Transcriptional regulator GfcR (212 aa).

Belongs to the purine/pyrimidine phosphoribosyltransferase family. GfcR subfamily.

Its function is as follows. DNA-binding transcriptional regulator that functions as a regulator of central sugar catabolic pathways. The sequence is that of Transcriptional regulator GfcR from Halobacterium salinarum (strain ATCC 29341 / DSM 671 / R1).